A 634-amino-acid chain; its full sequence is 1-deoxy-D-xylulose-5-phosphate synthase (634 aa).

Thiamine diphosphate-binding positions include histidine 74 and 115–117 (AHS). Residue aspartate 146 participates in Mg(2+) binding. Thiamine diphosphate contacts are provided by residues 147–148 (GA), asparagine 176, tyrosine 283, and glutamate 365. Asparagine 176 is a binding site for Mg(2+).

This sequence belongs to the transketolase family. DXPS subfamily. In terms of assembly, homodimer. Mg(2+) is required as a cofactor. The cofactor is thiamine diphosphate.

It catalyses the reaction D-glyceraldehyde 3-phosphate + pyruvate + H(+) = 1-deoxy-D-xylulose 5-phosphate + CO2. It functions in the pathway metabolic intermediate biosynthesis; 1-deoxy-D-xylulose 5-phosphate biosynthesis; 1-deoxy-D-xylulose 5-phosphate from D-glyceraldehyde 3-phosphate and pyruvate: step 1/1. In terms of biological role, catalyzes the acyloin condensation reaction between C atoms 2 and 3 of pyruvate and glyceraldehyde 3-phosphate to yield 1-deoxy-D-xylulose-5-phosphate (DXP). This is 1-deoxy-D-xylulose-5-phosphate synthase from Burkholderia thailandensis (strain ATCC 700388 / DSM 13276 / CCUG 48851 / CIP 106301 / E264).